A 304-amino-acid chain; its full sequence is Recombination-associated protein RdgC (304 aa).

It belongs to the RdgC family.

It is found in the cytoplasm. The protein localises to the nucleoid. Functionally, may be involved in recombination. The polypeptide is Recombination-associated protein RdgC (Shewanella sp. (strain MR-4)).